The following is a 432-amino-acid chain: MFRPDLDDIPALGSETSSLDNTVENGNYRVKLWRDKSGIRSPPSTFCTWFKQYQIGLSLGSLLLLILMFTCLPYYDNVSGTYTRGRDDLAFIFSGVVLFTALRAISMIYLLEPLARLCGVHKKLMVRFTEQGWLVIHHSLFWTTGMYINYNSEYWMDLDGVWSGFPERTMTGLTKGYYLLQLAFWLQQIVVVNFEKRRKDYSQMLTHHLITSVLLATSYSYYQTKVGNVILCLVDIVDVLFAFAKLLKYLGFQYACDVAFCVFLASWLVARHGLYLLVCWSIFTILPTVMPYGCYDTISGNRLSEFPADGGNEIMREVLQAFRDPGGPVCFNSRIGWAFLGLLVGLQVLMLIWLGMILKVAYKVFQGEGADDTRSDSEESGYGTSDHEGDCYGAQAGNPKVIRQFVASREKVHIEQAENQGLHLRQQKRSAR.

Residues 55–75 (IGLSLGSLLLLILMFTCLPYY) form a helical membrane-spanning segment. Residue Asn77 is glycosylated (N-linked (GlcNAc...) asparagine). 7 consecutive transmembrane segments (helical) span residues 91–111 (FIFS…IYLL), 128–148 (FTEQ…GMYI), 172–192 (GLTK…IVVV), 226–246 (VGNV…FAKL), 250–270 (LGFQ…WLVA), 273–293 (GLYL…MPYG), and 338–358 (AFLG…GMIL). The region spanning 123 to 366 (KLMVRFTEQG…ILKVAYKVFQ (244 aa)) is the TLC domain. The tract at residues 370 to 395 (ADDTRSDSEESGYGTSDHEGDCYGAQ) is disordered.

The protein belongs to the sphingosine N-acyltransferase family.

Its subcellular location is the membrane. The protein operates within mycotoxin biosynthesis. Its function is as follows. Sphingosine N-acyltransferase-like protein; part of the gene cluster that mediates the biosynthesis of the host-selective toxins (HSTs) AAL-toxins, sphinganine-analog mycotoxins responsible for Alternaria stem canker on tomato by the tomato pathotype. The biosynthesis starts with the polyketide synthase ALT1-catalyzed C-16 carbon chain assembly from one starter acetyl-CoA unit with malonyl-CoA extender units. ALT1 also selectively transfers methyl groups at the first and the third cycle of chain elongation for AAL toxin. The C-16 polyketide chain is released from the enzyme by a nucleophilic attack of a carbanion, which is derived from R-carbon of glycin by decarboxylation, on the carbonyl carbon of polyketide acyl chain. This step is probably catalyzed by a pyridoxal 5'-phosphate-dependent aminoacyl transferase ALT4. The respective functions of the other enzymes encoded by the cluster have still to be elucidated. The sphingosine N-acyltransferase-like protein ALT7 seems not to act as a resistance/self-tolerance factor against the toxin in the toxin biosynthetic gene cluster, contrary to what is expected. This chain is Sphingosine N-acyltransferase-like protein ALT7, found in Alternaria alternata (Alternaria rot fungus).